We begin with the raw amino-acid sequence, 221 residues long: Ribosomal RNA small subunit methyltransferase G (221 aa).

S-adenosyl-L-methionine contacts are provided by residues G83, F88, 132–133 (LE), and R146.

Belongs to the methyltransferase superfamily. RNA methyltransferase RsmG family.

The protein localises to the cytoplasm. The enzyme catalyses guanosine(527) in 16S rRNA + S-adenosyl-L-methionine = N(7)-methylguanosine(527) in 16S rRNA + S-adenosyl-L-homocysteine. Functionally, specifically methylates the N7 position of guanine in position 527 of 16S rRNA. This is Ribosomal RNA small subunit methyltransferase G from Zymomonas mobilis subsp. mobilis (strain ATCC 31821 / ZM4 / CP4).